Here is a 396-residue protein sequence, read N- to C-terminus: Cytochrome b (396 aa).

The next 4 membrane-spanning stretches (helical) occupy residues 32–52, 76–98, 113–133, and 179–199; these read FGSL…TLAM, WLLR…LHIG, LWSI…IGYV, and FFSL…MHLL. Heme b is bound by residues histidine 82 and histidine 96. 2 residues coordinate heme b: histidine 183 and histidine 197. Histidine 202 is a binding site for a ubiquinone. 4 helical membrane-spanning segments follow: residues 225-245, 289-309, 321-341, and 348-368; these read FTSK…IFVF, LGGV…ALIH, LLNL…WVGA, and YILI…ILMI.

This sequence belongs to the cytochrome b family. Fungal cytochrome b-c1 complex contains 10 subunits; 3 respiratory subunits, 2 core proteins and 5 low-molecular weight proteins. Cytochrome b-c1 complex is a homodimer. Heme b is required as a cofactor.

It localises to the mitochondrion inner membrane. Component of the ubiquinol-cytochrome c reductase complex (complex III or cytochrome b-c1 complex) that is part of the mitochondrial respiratory chain. The b-c1 complex mediates electron transfer from ubiquinol to cytochrome c. Contributes to the generation of a proton gradient across the mitochondrial membrane that is then used for ATP synthesis. The polypeptide is Cytochrome b (cob) (Spizellomyces punctatus).